The primary structure comprises 248 residues: UDP-N-acetyl-D-mannosaminuronic acid transferase (248 aa).

The protein belongs to the glycosyltransferase 26 family.

The catalysed reaction is UDP-N-acetyl-alpha-D-mannosaminouronate + N-acetyl-alpha-D-glucosaminyl-di-trans,octa-cis-undecaprenyl diphosphate = beta-D-ManNAcA-(1-&gt;4)-alpha-D-GlcNAc-di-trans,octa-cis-undecaprenyl diphosphate + UDP + H(+). It participates in bacterial outer membrane biogenesis; enterobacterial common antigen biosynthesis. Functionally, catalyzes the synthesis of Und-PP-GlcNAc-ManNAcA (Lipid II), the second lipid-linked intermediate involved in enterobacterial common antigen (ECA) synthesis. In Klebsiella pneumoniae subsp. pneumoniae (strain ATCC 700721 / MGH 78578), this protein is UDP-N-acetyl-D-mannosaminuronic acid transferase.